A 647-amino-acid chain; its full sequence is 1-deoxy-D-xylulose-5-phosphate synthase (647 aa).

Thiamine diphosphate is bound by residues His-74 and 115 to 117 (GHS). Asp-146 serves as a coordination point for Mg(2+). Thiamine diphosphate contacts are provided by residues 147–148 (GA), Asn-175, Tyr-286, and Glu-367. Position 175 (Asn-175) interacts with Mg(2+).

This sequence belongs to the transketolase family. DXPS subfamily. In terms of assembly, homodimer. Requires Mg(2+) as cofactor. It depends on thiamine diphosphate as a cofactor.

The catalysed reaction is D-glyceraldehyde 3-phosphate + pyruvate + H(+) = 1-deoxy-D-xylulose 5-phosphate + CO2. It functions in the pathway metabolic intermediate biosynthesis; 1-deoxy-D-xylulose 5-phosphate biosynthesis; 1-deoxy-D-xylulose 5-phosphate from D-glyceraldehyde 3-phosphate and pyruvate: step 1/1. Functionally, catalyzes the acyloin condensation reaction between C atoms 2 and 3 of pyruvate and glyceraldehyde 3-phosphate to yield 1-deoxy-D-xylulose-5-phosphate (DXP). The sequence is that of 1-deoxy-D-xylulose-5-phosphate synthase from Heliobacterium modesticaldum (strain ATCC 51547 / Ice1).